A 331-amino-acid polypeptide reads, in one-letter code: Pyrimidine monooxygenase RutA (331 aa).

FMN is bound by residues 79-80 (IK), N145, E154, 170-171 (RY), and S220. The segment at 300-331 (WLTEQSQKDTRSGTDTNVRQMADPTSASAFNH) is disordered. Polar residues predominate over residues 312–331 (GTDTNVRQMADPTSASAFNH).

This sequence belongs to the NtaA/SnaA/DszA monooxygenase family. RutA subfamily.

The catalysed reaction is uracil + FMNH2 + NADH + O2 = (Z)-3-ureidoacrylate + FMN + NAD(+) + H2O + H(+). It carries out the reaction thymine + FMNH2 + NADH + O2 = (Z)-2-methylureidoacrylate + FMN + NAD(+) + H2O + H(+). In terms of biological role, catalyzes the pyrimidine ring opening between N-3 and C-4 by an unusual flavin hydroperoxide-catalyzed mechanism, adding oxygen atoms in the process to yield ureidoacrylate peracid, that immediately reacts with FMN forming ureidoacrylate and FMN-N(5)-oxide. The FMN-N(5)-oxide reacts spontaneously with NADH to produce FMN. Requires the flavin reductase RutF to regenerate FMN in vivo. This Escherichia coli O7:K1 (strain IAI39 / ExPEC) protein is Pyrimidine monooxygenase RutA.